Consider the following 146-residue polypeptide: Cytochrome c-type biogenesis protein CcmE (146 aa).

Topologically, residues 1–7 (MQAKHQR) are cytoplasmic. A helical; Signal-anchor for type II membrane protein membrane pass occupies residues 8–28 (LILGIIALAAVIAAGFLALVA). Over 29-146 (FKKQAAYFFT…AATQTTLQEK (118 aa)) the chain is Periplasmic. Residues histidine 123 and tyrosine 127 each coordinate heme.

It belongs to the CcmE/CycJ family.

The protein localises to the cell inner membrane. Functionally, heme chaperone required for the biogenesis of c-type cytochromes. Transiently binds heme delivered by CcmC and transfers the heme to apo-cytochromes in a process facilitated by CcmF and CcmH. The chain is Cytochrome c-type biogenesis protein CcmE from Zymomonas mobilis subsp. mobilis (strain ATCC 31821 / ZM4 / CP4).